We begin with the raw amino-acid sequence, 163 residues long: Nucleotide-binding protein YajQ (163 aa).

This sequence belongs to the YajQ family.

In terms of biological role, nucleotide-binding protein. The chain is Nucleotide-binding protein YajQ from Salmonella heidelberg (strain SL476).